The following is a 349-amino-acid chain: UDP-N-acetylenolpyruvoylglucosamine reductase (349 aa).

Residues 24-197 (FGIAATARFA…VSVTFRLPKQ (174 aa)) form the FAD-binding PCMH-type domain. R173 is a catalytic residue. The active-site Proton donor is S249. E345 is a catalytic residue.

It belongs to the MurB family. FAD is required as a cofactor.

Its subcellular location is the cytoplasm. The catalysed reaction is UDP-N-acetyl-alpha-D-muramate + NADP(+) = UDP-N-acetyl-3-O-(1-carboxyvinyl)-alpha-D-glucosamine + NADPH + H(+). It participates in cell wall biogenesis; peptidoglycan biosynthesis. Functionally, cell wall formation. The polypeptide is UDP-N-acetylenolpyruvoylglucosamine reductase (Burkholderia lata (strain ATCC 17760 / DSM 23089 / LMG 22485 / NCIMB 9086 / R18194 / 383)).